The chain runs to 390 residues: Histamine H4 receptor (390 aa).

The Extracellular segment spans residues 1–19 (MPDTNSTINLSLSTRVTLA). N-linked (GlcNAc...) asparagine glycosylation is found at N5 and N9. The chain crosses the membrane as a helical span at residues 20–40 (FFMSLVAFAIMLGNALVILAF). The Cytoplasmic segment spans residues 41–52 (VVDKNLRHRSSY). A helical membrane pass occupies residues 53 to 73 (FFLNLAISDFFVGVISIPLYI). Residues 74–87 (PHTLFEWDFGKEIC) are Extracellular-facing. C87 and C164 form a disulfide bridge. The chain crosses the membrane as a helical span at residues 88–108 (VFWLTTDYLLCTASVYNIVLI). Over 109-131 (SYDRYLSVSNAVSYRTQHTGVLK) the chain is Cytoplasmic. Residues 132 to 152 (IVTLMVAVWVLAFLVNGPMIL) form a helical membrane-spanning segment. The Extracellular segment spans residues 153–172 (VSESWKDEGSECEPGFFSEW). Residues 173-193 (YILAITSFLEFVIPVILVAYF) traverse the membrane as a helical segment. The Cytoplasmic portion of the chain corresponds to 194–304 (NMNIYWSLWK…LLRARRLAKS (111 aa)). Residues 305–325 (LAILLGVFAVCWAPYSLFTIV) traverse the membrane as a helical segment. The Extracellular segment spans residues 326–341 (LSFYSSATGPKSVWYR). The chain crosses the membrane as a helical span at residues 342–362 (IAFWLQWFNSFVNPLLYPLCH). Over 363-390 (KRFQKAFLKIFCIKKQPLPSQHSRSVSS) the chain is Cytoplasmic.

The protein belongs to the G-protein coupled receptor 1 family. Interacts with TSPAN4. In terms of tissue distribution, expressed primarily in the bone marrow and eosinophils. Shows preferential distribution in cells of immunological relevance such as T-cells, dendritic cells, monocytes, mast cells, neutrophils. Also expressed in a wide variety of peripheral tissues, including the heart, kidney, liver, lung, pancreas, skeletal muscle, prostate, small intestine, spleen, testis, colon, fetal liver and lymph node.

The protein localises to the cell membrane. Its function is as follows. The H4 subclass of histamine receptors could mediate the histamine signals in peripheral tissues. Displays a significant level of constitutive activity (spontaneous activity in the absence of agonist). This Homo sapiens (Human) protein is Histamine H4 receptor (HRH4).